Reading from the N-terminus, the 551-residue chain is Harmonin (551 aa).

An N-terminal domain region spans residues 1–86 (MDRKVAREFR…LTPRRSRKLK (86 aa)). PDZ domains follow at residues 87–169 (EVRL…HIGL) and 211–293 (KVFI…AGAG). Residues 194–532 (GGRSSLGSPG…QKAWNQGDWI (339 aa)) are mediates interaction with MYO7B. Position 219 is a phosphoserine (Ser-219). A coiled-coil region spans residues 318-377 (LMQKRLAMESNKILQEQQEMERQRKKEIAQKAAEENERYRKEMEQIVEEEEKFRKQWEED). The disordered stretch occupies residues 401 to 425 (KPKYDLGVDPEFDPADDLDGGTNKR). The segment covering 408–419 (VDPEFDPADDLD) has biased composition (acidic residues). A PDZ 3 domain is found at 452-536 (DVRLLRVKKE…NQGDWIDLVV (85 aa)).

As to quaternary structure, part of the IMAC/intermicrovillar adhesion complex/intermicrovillar tip-link complex composed of ANKS4B, MYO7B, USH1C, CDHR2 and CDHR5. Part of a complex composed of USH1C, USH1G and MYO7A. Interacts with F-actin. Interacts with USH2A. Interacts with SLC4A7. Interacts (via PDZ1 domain) with the C-terminus of USHBP1. Interacts (via N-terminus and PDZ 2 domain) with CDH23. Interacts with USH1G. Interacts with MYO7B. Interacts with CDHR2 and CDHR5; may mediate their interaction with MYO7B at the microvilli tip. Interacts (via PDZ 1 domain) with ANKS4B. Interacts (via PDZ 1 domain) with DOCK4.

It localises to the cytoplasm. The protein localises to the cytosol. Its subcellular location is the cytoskeleton. It is found in the cell projection. The protein resides in the microvillus. In terms of biological role, anchoring/scaffolding protein that is a part of the functional network formed by USH1C, USH1G, CDH23 and MYO7A that mediates mechanotransduction in cochlear hair cells. Required for normal development and maintenance of cochlear hair cell bundles. As part of the intermicrovillar adhesion complex/IMAC plays a role in brush border differentiation, controlling microvilli organization and length. Probably plays a central regulatory role in the assembly of the complex, recruiting CDHR2, CDHR5 and MYO7B to the microvilli tips. In Bos taurus (Bovine), this protein is Harmonin (USH1C).